Consider the following 206-residue polypeptide: Bis(5'-adenosyl)-triphosphatase (206 aa).

The region spanning 3 to 115 is the HIT domain; it reads KPIYFSKFLV…KINNVGDLIY (113 aa). The short motif at 96 to 100 is the Histidine triad motif element; sequence HLHTH. Residue His98 is the Tele-AMP-histidine intermediate of the active site. The tract at residues 143 to 164 is disordered; sequence RQARKNNSTSATVDGDELSQGP.

Homodimer. Requires Mn(2+) as cofactor.

It is found in the cytoplasm. Its subcellular location is the nucleus. It localises to the mitochondrion. The catalysed reaction is P(1),P(3)-bis(5'-adenosyl) triphosphate + H2O = AMP + ADP + 2 H(+). Functionally, cleaves A-5'-PPP-5'A to yield AMP and ADP. Can cleave all dinucleoside polyphosphates, provided the phosphate chain contains at least 3 phosphates and that 1 of the 2 bases composing the nucleotide is a purine. Is most effective on dinucleoside triphosphates. Negatively regulates intracellular dinucleoside polyphosphate levels, which elevate following heat shock. The sequence is that of Bis(5'-adenosyl)-triphosphatase (HNT2) from Saccharomyces cerevisiae (strain RM11-1a) (Baker's yeast).